The following is a 335-amino-acid chain: Methionine import ATP-binding protein MetN 1 (335 aa).

The ABC transporter domain occupies 2-242; sequence IEFHNVHKTY…PQHATTRRFV (241 aa). 38–45 serves as a coordination point for ATP; that stretch reads GHSGAGKS.

The protein belongs to the ABC transporter superfamily. Methionine importer (TC 3.A.1.24) family. The complex is composed of two ATP-binding proteins (MetN), two transmembrane proteins (MetI) and a solute-binding protein (MetQ).

The protein resides in the cell inner membrane. The enzyme catalyses L-methionine(out) + ATP + H2O = L-methionine(in) + ADP + phosphate + H(+). It carries out the reaction D-methionine(out) + ATP + H2O = D-methionine(in) + ADP + phosphate + H(+). Functionally, part of the ABC transporter complex MetNIQ involved in methionine import. Responsible for energy coupling to the transport system. The chain is Methionine import ATP-binding protein MetN 1 from Pseudomonas syringae pv. syringae (strain B728a).